The following is a 427-amino-acid chain: Homoserine O-acetyltransferase FUB5 (427 aa).

Low complexity predominate over residues 1-13; the sequence is MTTTTTAPALPTP. The disordered stretch occupies residues 1-35; sequence MTTTTTAPALPTPIHDGLGNGTTYERSIPRPVNPF. The 324-residue stretch at 77–400 folds into the AB hydrolase-1 domain; the sequence is NVMIICHALS…VSDDGHDAFL (324 aa). Ser175 functions as the Nucleophile in the catalytic mechanism. The tract at residues 260–297 is disordered; sequence RFGRDTGNKKKAKNKGSETLPSNSTPIHSQGGADETPV. A compositionally biased stretch (polar residues) spans 276–287; it reads SETLPSNSTPIH. Residues Asp367 and His396 contribute to the active site.

This sequence belongs to the AB hydrolase superfamily. MetX family.

The enzyme catalyses L-homoserine + acetyl-CoA = O-acetyl-L-homoserine + CoA. The protein operates within mycotoxin biosynthesis. Its function is as follows. Homoserine O-acetyltransferase; part of the gene cluster that mediates the biosynthesis of fusaric acid, a mycotoxin with low to moderate toxicity to animals and humans, but with high phytotoxic properties. L-aspartate is suggested as fusaric acid amino acid precursor that is activated and further processed to O-acetyl-L-homoserine by cluster enzymes aspartate kinase FUB3 and homoserine O-acetyltransferase FUB5, as well as enzymes of the primary metabolism. The polyketide synthase (PKS) FUB1 generates the triketide trans-2-hexenal which is presumptively released by the hydrolase FUB4 and linked to the NRPS-bound amino acid precursor by NAD(P)-dependent dehydrogenase FUB6. FUB1, FUB4, and the non-canonical NRPS Fub8 may form an enzyme complex. Further processing of the NRPS-bound intermediate might be carried out by FUB6 and the sulfhydrylase FUB7, enabling a spontaneous electrocyclization to close the carbon backbone of fusaric acid. Dihydrofusaric acid is likely to be released via reduction by the thioester reductase (TR) domain of FUB8 whereupon the final oxidation to fusaric acid may (also) be performed by the FMN-dependent dehydrogenase FUB9. This chain is Homoserine O-acetyltransferase FUB5, found in Gibberella fujikuroi (strain CBS 195.34 / IMI 58289 / NRRL A-6831) (Bakanae and foot rot disease fungus).